The chain runs to 239 residues: Lactate utilization protein A 1 (239 aa).

This sequence belongs to the LutA/YkgE family.

In terms of biological role, is involved in L-lactate degradation and allows cells to grow with lactate as the sole carbon source. In Bacillus anthracis (strain A0248), this protein is Lactate utilization protein A 1.